The following is a 146-amino-acid chain: NADH-quinone oxidoreductase subunit A (146 aa).

3 consecutive transmembrane segments (helical) span residues 8 to 28, 63 to 83, and 93 to 113; these read FGSV…GYLT, FYVV…LYPW, and FALI…AYAW.

It belongs to the complex I subunit 3 family. NDH-1 is composed of 14 different subunits. Subunits NuoA, H, J, K, L, M, N constitute the membrane sector of the complex.

It is found in the cell inner membrane. The enzyme catalyses a quinone + NADH + 5 H(+)(in) = a quinol + NAD(+) + 4 H(+)(out). NDH-1 shuttles electrons from NADH, via FMN and iron-sulfur (Fe-S) centers, to quinones in the respiratory chain. The immediate electron acceptor for the enzyme in this species is believed to be a menaquinone. Couples the redox reaction to proton translocation (for every two electrons transferred, four hydrogen ions are translocated across the cytoplasmic membrane), and thus conserves the redox energy in a proton gradient. The protein is NADH-quinone oxidoreductase subunit A of Chlorobium chlorochromatii (strain CaD3).